A 201-amino-acid polypeptide reads, in one-letter code: Small ribosomal subunit protein uS4 (201 aa).

The 61-residue stretch at 91-151 folds into the S4 RNA-binding domain; the sequence is SRLDNVVYRA…EKSRSMLWFE (61 aa).

This sequence belongs to the universal ribosomal protein uS4 family. As to quaternary structure, part of the 30S ribosomal subunit. Contacts protein S5. The interaction surface between S4 and S5 is involved in control of translational fidelity.

In terms of biological role, one of the primary rRNA binding proteins, it binds directly to 16S rRNA where it nucleates assembly of the body of the 30S subunit. Its function is as follows. With S5 and S12 plays an important role in translational accuracy. In Corynebacterium jeikeium (strain K411), this protein is Small ribosomal subunit protein uS4.